The sequence spans 126 residues: Aspartate 1-decarboxylase (126 aa).

Ser-25 acts as the Schiff-base intermediate with substrate; via pyruvic acid in catalysis. A Pyruvic acid (Ser) modification is found at Ser-25. Residue Thr-57 participates in substrate binding. The active-site Proton donor is Tyr-58. Substrate is bound at residue 73-75 (GAA).

This sequence belongs to the PanD family. In terms of assembly, heterooctamer of four alpha and four beta subunits. It depends on pyruvate as a cofactor. Is synthesized initially as an inactive proenzyme, which is activated by self-cleavage at a specific serine bond to produce a beta-subunit with a hydroxyl group at its C-terminus and an alpha-subunit with a pyruvoyl group at its N-terminus.

It localises to the cytoplasm. It catalyses the reaction L-aspartate + H(+) = beta-alanine + CO2. Its pathway is cofactor biosynthesis; (R)-pantothenate biosynthesis; beta-alanine from L-aspartate: step 1/1. Its function is as follows. Catalyzes the pyruvoyl-dependent decarboxylation of aspartate to produce beta-alanine. In Pseudomonas aeruginosa (strain LESB58), this protein is Aspartate 1-decarboxylase.